Reading from the N-terminus, the 702-residue chain is Ferrioxamine B receptor (702 aa).

The first 30 residues, 1–30 (MPLEMFMFATTRMALLIGGAIGGATFPLFA), serve as a signal peptide directing secretion. Residues 55–168 (PDIETPQSVS…PGGIVALTSR (114 aa)) enclose the TBDR plug domain. The 530-residue stretch at 173 to 702 (DAGGEVKLFA…SIVGSVSWAF (530 aa)) folds into the TBDR beta-barrel domain.

The protein belongs to the TonB-dependent receptor family.

Its subcellular location is the cell outer membrane. Ferrioxamine binding and uptake, in association with the TonB protein. May play a role in intestinal colonization. The polypeptide is Ferrioxamine B receptor (foxA) (Salmonella typhimurium (strain SL1344)).